Reading from the N-terminus, the 96-residue chain is Phosphoribosyl-ATP pyrophosphatase (96 aa).

The protein belongs to the PRA-PH family.

It is found in the cytoplasm. It catalyses the reaction 1-(5-phospho-beta-D-ribosyl)-ATP + H2O = 1-(5-phospho-beta-D-ribosyl)-5'-AMP + diphosphate + H(+). It functions in the pathway amino-acid biosynthesis; L-histidine biosynthesis; L-histidine from 5-phospho-alpha-D-ribose 1-diphosphate: step 2/9. This Methanococcus maripaludis (strain C5 / ATCC BAA-1333) protein is Phosphoribosyl-ATP pyrophosphatase.